The following is a 387-amino-acid chain: Acyltransferase MdmB (387 aa).

10 consecutive transmembrane segments (helical) span residues 8–28, 45–65, 85–105, 139–161, 170–190, 209–229, 236–256, 258–278, 292–312, and 336–356; these read LPSLTGLRWFAALAVFACHIA, ITTLGSIAVSVFFLLSGFVLA, IYPLHLVTFLIAGVIIFSLAE, TPSWSLSCEFAFYLTFPLWYRLV, WWCAAGIAAAVICVPFVTSQF, CWLPPVRMLEFVLGIVMALIL, GPGVVSSALLLAAAYGVTQVV, PMFTIAACSIVPAALLITALA, AVLVRLGEWSFAFYLVHFMVI, and ALALAMLAVAIVAGGLLHTVV.

The protein belongs to the acyltransferase 3 family.

Its subcellular location is the cell membrane. In terms of biological role, catalyzes the acylation of the mycaminose sugar during midecamycin biosynthesis. This is Acyltransferase MdmB (mdmB) from Streptomyces mycarofaciens.